The primary structure comprises 112 residues: uncharacterized protein (112 aa).

The helical transmembrane segment at 75–95 (ILGVFGGFIYILTPLPIVSGF) threads the bilayer.

It is found in the membrane. This is an uncharacterized protein from Methanocaldococcus jannaschii (strain ATCC 43067 / DSM 2661 / JAL-1 / JCM 10045 / NBRC 100440) (Methanococcus jannaschii).